Here is a 176-residue protein sequence, read N- to C-terminus: Ribosome rescue factor SmrB (176 aa).

Residues 93 to 168 (LDLHGYRQSE…GDAALLVLID (76 aa)) enclose the Smr domain.

Belongs to the SmrB family. Associates with collided ribosomes, but not with correctly translating polysomes.

In terms of biological role, acts as a ribosome collision sensor. Detects stalled/collided disomes (pairs of ribosomes where the leading ribosome is stalled and a second ribosome has collided with it) and endonucleolytically cleaves mRNA at the 5' boundary of the stalled ribosome. Stalled/collided disomes form a new interface (primarily via the 30S subunits) that binds SmrB. Cleaved mRNA becomes available for tmRNA ligation, leading to ribosomal subunit dissociation and rescue of stalled ribosomes. The polypeptide is Ribosome rescue factor SmrB (Shewanella oneidensis (strain ATCC 700550 / JCM 31522 / CIP 106686 / LMG 19005 / NCIMB 14063 / MR-1)).